Reading from the N-terminus, the 422-residue chain is Tryptophan synthase beta chain 1 (422 aa).

Lys-107 bears the N6-(pyridoxal phosphate)lysine mark.

The protein belongs to the TrpB family. In terms of assembly, tetramer of two alpha and two beta chains. The cofactor is pyridoxal 5'-phosphate.

It catalyses the reaction (1S,2R)-1-C-(indol-3-yl)glycerol 3-phosphate + L-serine = D-glyceraldehyde 3-phosphate + L-tryptophan + H2O. Its pathway is amino-acid biosynthesis; L-tryptophan biosynthesis; L-tryptophan from chorismate: step 5/5. Functionally, the beta subunit is responsible for the synthesis of L-tryptophan from indole and L-serine. The polypeptide is Tryptophan synthase beta chain 1 (trpB1) (Sulfurisphaera tokodaii (strain DSM 16993 / JCM 10545 / NBRC 100140 / 7) (Sulfolobus tokodaii)).